The chain runs to 304 residues: UDP-3-O-acyl-N-acetylglucosamine deacetylase (304 aa).

Zn(2+)-binding residues include His-78, His-237, and Asp-241. The Proton donor role is filled by His-264.

This sequence belongs to the LpxC family. Requires Zn(2+) as cofactor.

The enzyme catalyses a UDP-3-O-[(3R)-3-hydroxyacyl]-N-acetyl-alpha-D-glucosamine + H2O = a UDP-3-O-[(3R)-3-hydroxyacyl]-alpha-D-glucosamine + acetate. It functions in the pathway glycolipid biosynthesis; lipid IV(A) biosynthesis; lipid IV(A) from (3R)-3-hydroxytetradecanoyl-[acyl-carrier-protein] and UDP-N-acetyl-alpha-D-glucosamine: step 2/6. Functionally, catalyzes the hydrolysis of UDP-3-O-myristoyl-N-acetylglucosamine to form UDP-3-O-myristoylglucosamine and acetate, the committed step in lipid A biosynthesis. The sequence is that of UDP-3-O-acyl-N-acetylglucosamine deacetylase from Alcanivorax borkumensis (strain ATCC 700651 / DSM 11573 / NCIMB 13689 / SK2).